Consider the following 382-residue polypeptide: N-acetylglucosamine-6-phosphate deacetylase (382 aa).

Glu131 contributes to the a divalent metal cation binding site. 142 to 143 (TH) provides a ligand contact to substrate. 2 residues coordinate a divalent metal cation: His195 and His216. Residues 219–220 (NA), Arg227, and 248–251 (DGLH) contribute to the substrate site. Asp273 (proton donor/acceptor) is an active-site residue. A substrate-binding site is contributed by 306–308 (LSG).

This sequence belongs to the metallo-dependent hydrolases superfamily. NagA family. In terms of assembly, homotetramer. It depends on a divalent metal cation as a cofactor.

It catalyses the reaction N-acetyl-D-glucosamine 6-phosphate + H2O = D-glucosamine 6-phosphate + acetate. Its pathway is amino-sugar metabolism; N-acetylneuraminate degradation; D-fructose 6-phosphate from N-acetylneuraminate: step 4/5. Functionally, involved in the first committed step in the biosynthesis of amino-sugar-nucleotides. Catalyzes the hydrolysis of the N-acetyl group of N-acetylglucosamine-6-phosphate (GlcNAc-6-P) to yield glucosamine 6-phosphate and acetate. Can probably also catalyze the deacetylation of N-acetyl-D-galactosamine 6-phosphate to D-galactosamine 6-phosphate. The chain is N-acetylglucosamine-6-phosphate deacetylase (nagA) from Escherichia coli O157:H7.